Here is a 175-residue protein sequence, read N- to C-terminus: Disulfide bond formation protein B (175 aa).

Topologically, residues 1–13 (MVSNWLDAAPRRV) are cytoplasmic. The helical transmembrane segment at 14 to 30 (LALISAACIAMLAFGMY) threads the bilayer. Topologically, residues 31–48 (LQHVVGLEPCPMCIVQRY) are periplasmic. Residues Cys-40 and Cys-43 are joined by a disulfide bond. Residues 49 to 65 (ALIGVAVFTGLGSLRGG) traverse the membrane as a helical segment. Residues 66–70 (RGWWM) lie on the Cytoplasmic side of the membrane. The helical transmembrane segment at 71–88 (TWGVLALLLSGFGAFVAA) threads the bilayer. Residues 89 to 144 (RQSWLQWYPPEIATCGRDFYGMIENFPISRAIPMIFRGSGDCAAIDWTFLGGSIAN) are Periplasmic-facing. The cysteines at positions 103 and 130 are disulfide-linked. The chain crosses the membrane as a helical span at residues 145–163 (WSFVCFVVMALVLLVMLLR). At 164-175 (APRPARGGFSAA) the chain is on the cytoplasmic side.

It belongs to the DsbB family.

It is found in the cell inner membrane. Required for disulfide bond formation in some periplasmic proteins. Acts by oxidizing the DsbA protein. The protein is Disulfide bond formation protein B of Paracidovorax citrulli (strain AAC00-1) (Acidovorax citrulli).